A 498-amino-acid chain; its full sequence is Cytochrome P450 6B1 (498 aa).

Residue C443 coordinates heme.

The protein belongs to the cytochrome P450 family. The cofactor is heme. As to expression, midgut microsome.

It localises to the endoplasmic reticulum membrane. It is found in the microsome membrane. The catalysed reaction is an organic molecule + reduced [NADPH--hemoprotein reductase] + O2 = an alcohol + oxidized [NADPH--hemoprotein reductase] + H2O + H(+). Functionally, enables the insect to feed on furanocoumarin-producing plants and evolved as an adaptation for detoxification of xanthotoxin and other furanocoumarins. This chain is Cytochrome P450 6B1 (CYP6B1), found in Papilio polyxenes (Black swallowtail butterfly).